A 351-amino-acid polypeptide reads, in one-letter code: MPGAAAKGSELSERIESFVETLKRGGGRRTSEDMARETLGLLRRLITDHHWNNAGDLMDLIRREGRRMTAAHPPETTVGNMVRRVLKIIREEYGRLHGRSDESDQQESLHKLLTSGGLSEDFSFHYAPLKSNIIEAINELLVELEGTTENIAAQALEHIHSNEVIMTIGFSRTVEAFLREAAQKRKFHVIAAECAPFCQGHEMAVNLSEAGIETTVMTDAAIFAVMSRVNKVIIGTKTILANGSLRAVAGTHTLALAAKHHSTPLIVCAPMFKLSPQFPSEEDSFHKFVAPEEVLPFTEGDILEKVSVHCPVFDYVPPDLITLFISNIGGNAPSYVYRLMSELYHPDDHVL.

This sequence belongs to the eIF-2B alpha/beta/delta subunits family. Component of the translation initiation factor 2B (eIF2B) complex which is a heterodecamer of two sets of five different subunits: alpha, beta, gamma, delta and epsilon. Subunits alpha, beta and delta comprise a regulatory subcomplex and subunits epsilon and gamma comprise a catalytic subcomplex. Within the complex, the hexameric regulatory complex resides at the center, with the two heterodimeric catalytic subcomplexes bound on opposite sides.

Its subcellular location is the cytoplasm. The protein localises to the cytosol. With respect to regulation, activated by the chemical integrated stress response (ISR) inhibitor ISRIB which stimulates guanine nucleotide exchange factor activity for both phosphorylated and unphosphorylated eIF2. Its function is as follows. Acts as a component of the translation initiation factor 2B (eIF2B) complex, which catalyzes the exchange of GDP for GTP on eukaryotic initiation factor 2 (eIF2) gamma subunit. Its guanine nucleotide exchange factor activity is repressed when bound to eIF2 complex phosphorylated on the alpha subunit, thereby limiting the amount of methionyl-initiator methionine tRNA available to the ribosome and consequently global translation is repressed. The sequence is that of Translation initiation factor eIF2B subunit beta (Eif2b2) from Rattus norvegicus (Rat).